The following is a 466-amino-acid chain: UDP-N-acetylmuramoylalanine--D-glutamate ligase (466 aa).

121-127 (GTNGKST) serves as a coordination point for ATP.

The protein belongs to the MurCDEF family.

The protein resides in the cytoplasm. The enzyme catalyses UDP-N-acetyl-alpha-D-muramoyl-L-alanine + D-glutamate + ATP = UDP-N-acetyl-alpha-D-muramoyl-L-alanyl-D-glutamate + ADP + phosphate + H(+). Its pathway is cell wall biogenesis; peptidoglycan biosynthesis. Its function is as follows. Cell wall formation. Catalyzes the addition of glutamate to the nucleotide precursor UDP-N-acetylmuramoyl-L-alanine (UMA). The sequence is that of UDP-N-acetylmuramoylalanine--D-glutamate ligase from Bradyrhizobium diazoefficiens (strain JCM 10833 / BCRC 13528 / IAM 13628 / NBRC 14792 / USDA 110).